Here is a 442-residue protein sequence, read N- to C-terminus: MENAKMNSLIAQYPLVKDLVALQETTWFNPGTTSLAEGLPYVGLTEQDVQDAHARLSRFAPYLAKAFPETAATGGIIESELVAIPAMQKRLEKEYHQPIAGQLLLKKDSHLPISGSIKARGGIYEVLAHAEKLALEAGLLTLEDDYSKLLSPEFKQFFSQYSIAVGSTGNLGLSIGIMSARIGFKVTVHMSADARAWKKAKLRSHGVTVVEYEQDYGVAVEEGRKAAQSDPNCFFIDDENSRTLFLGYSVAGQRLKAQFAQQGRIVNADNPLFVYLPCGVGGGPGGVAFGLKLAFGDHVHCFFAEPTHSPCMLLGVHTGLHDQISVQDIGIDNLTAADGLAVGRASGFVGRAMERLLDGFYTLSDQTMYDMLGWLAQEEGIRLEPSALAGMAGPQRVCASVSYQQLHGFSAEQLRNATHLVWATGGGMVPEEEMNQYLAKGR.

Position 118 is an N6-(pyridoxal phosphate)lysine (K118).

Belongs to the serine/threonine dehydratase family. DsdA subfamily. As to quaternary structure, monomer. Requires pyridoxal 5'-phosphate as cofactor.

The enzyme catalyses D-serine = pyruvate + NH4(+). The protein is D-serine dehydratase 1 of Escherichia coli O6:K15:H31 (strain 536 / UPEC).